The sequence spans 353 residues: MSTRRDLPQSPYLAAVAGRKPSRVPVWFMRQAGRSLPEYRALRRQHSMLAACFEPEVACEVTMQPIRRYHVDAAILFSDIVVPLRAAGVDLDIVADVGPVIAAPVRTVADVDAIKPIDPQSIAPVLDAVELLVAELGDTPLIGFAGAPFTLASYLVEGGPSRHHARTKAMMLAEPATWHALMTKLTDLTIEFLLGQIRAGVDAIQVFDSWAGMLSLADYRQYALPHSARVFATLAEHGVPMTHFGVGTAELLGAMSEAVKPGTAKVVGVDWRTALADAAARVQPGTALQGNLDPVVLLAGWPAVERAARAVVDDGRRAVDAGAAGYVFNLGHGVLPQTDPGVLTDLVSLVHSL.

Residues 30–34 (RQAGR), D79, Y154, S209, and H332 each bind substrate.

It belongs to the uroporphyrinogen decarboxylase family. As to quaternary structure, homodimer.

It localises to the cytoplasm. It catalyses the reaction uroporphyrinogen III + 4 H(+) = coproporphyrinogen III + 4 CO2. The protein operates within porphyrin-containing compound metabolism; protoporphyrin-IX biosynthesis; coproporphyrinogen-III from 5-aminolevulinate: step 4/4. Its function is as follows. Catalyzes the decarboxylation of four acetate groups of uroporphyrinogen-III to yield coproporphyrinogen-III. The polypeptide is Uroporphyrinogen decarboxylase (Mycobacterium marinum (strain ATCC BAA-535 / M)).